The chain runs to 315 residues: Ankyrin repeat domain-containing protein SOWAHD (315 aa).

The tract at residues 1-39 is disordered; that stretch reads MAQLGGAANRAPTASLAPTSQSLRCAPQPRPSRADTGSL. ANK repeat units follow at residues 112-141, 147-162, and 186-216; these read PREH…ELLL, TGYS…GRHE, and GGLT…DATR.

It belongs to the SOWAH family.

The chain is Ankyrin repeat domain-containing protein SOWAHD (SOWAHD) from Homo sapiens (Human).